The following is a 331-amino-acid chain: 4-hydroxythreonine-4-phosphate dehydrogenase (331 aa).

Residues histidine 137 and threonine 138 each contribute to the substrate site. A divalent metal cation contacts are provided by histidine 167, histidine 212, and histidine 267. Substrate-binding residues include lysine 275, asparagine 284, and arginine 293.

This sequence belongs to the PdxA family. Homodimer. Requires Zn(2+) as cofactor. Mg(2+) is required as a cofactor. Co(2+) serves as cofactor.

The protein localises to the cytoplasm. The enzyme catalyses 4-(phosphooxy)-L-threonine + NAD(+) = 3-amino-2-oxopropyl phosphate + CO2 + NADH. It participates in cofactor biosynthesis; pyridoxine 5'-phosphate biosynthesis; pyridoxine 5'-phosphate from D-erythrose 4-phosphate: step 4/5. Catalyzes the NAD(P)-dependent oxidation of 4-(phosphooxy)-L-threonine (HTP) into 2-amino-3-oxo-4-(phosphooxy)butyric acid which spontaneously decarboxylates to form 3-amino-2-oxopropyl phosphate (AHAP). This Yersinia pseudotuberculosis serotype I (strain IP32953) protein is 4-hydroxythreonine-4-phosphate dehydrogenase.